The following is a 295-amino-acid chain: Thioredoxin-related transmembrane protein 2 (295 aa).

The N-terminal stretch at 1 to 48 (MAVLAPLIALVYSVPRLSRWLARPYCLLSALLSIAFLLVRKLPPICNG) is a signal peptide. The Extracellular portion of the chain corresponds to 49–102 (LPTQREDGNPCDFDWREVEILMFLSAIVMMKNRRSITVEQHVGNIFMFSKVANA). The chain crosses the membrane as a helical span at residues 103–125 (ILFFRLDIRMGLLYLTLCIVFLM). The 156-residue stretch at 114–269 (LLYLTLCIVF…LYQRAKKHSK (156 aa)) folds into the Thioredoxin domain. At 126–295 (TCKPPLYMGP…VPDGENKKDK (170 aa)) the chain is on the cytoplasmic side. Phosphoserine occurs at positions 211 and 243. The tract at residues 266 to 295 (KHSKGGDMSEEKPVDPAPTTVPDGENKKDK) is disordered. Residues 269–279 (KGGDMSEEKPV) show a composition bias toward basic and acidic residues. Residues 292–295 (KKDK) carry the Di-lysine motif motif.

In terms of assembly, monomer. Homodimer; disulfide-linked. Occurs in both reduced and oxidized monomeric form. Oxidative conditions increase homodimerization. Interacts with CANX. Interacts with ATP2A2.

It is found in the endoplasmic reticulum membrane. The protein resides in the mitochondrion membrane. Its function is as follows. Endoplasmic reticulum and mitochondria-associated protein that probably functions as a regulator of cellular redox state and thereby regulates protein post-translational modification, protein folding and mitochondrial activity. Indirectly regulates neuronal proliferation, migration, and organization in the developing brain. The protein is Thioredoxin-related transmembrane protein 2 (Tmx2) of Mus musculus (Mouse).